The primary structure comprises 308 residues: Phenylcoumaran benzylic ether reductase PT1 (308 aa).

Residues 11 to 17 (GATGYIG), arginine 36, and lysine 46 contribute to the NADP(+) site. Lysine 134 (proton acceptor) is an active-site residue. Arginine 138 provides a ligand contact to NADP(+).

It belongs to the NmrA-type oxidoreductase family. Isoflavone reductase subfamily.

It catalyses the reaction (-)-dehydrodiconiferyl alcohol + NADPH + H(+) = (S)-isodihydrodehydrodiconiferyl alcohol + NADP(+). The catalysed reaction is (+)-dehydrodiconiferyl alcohol + NADPH + H(+) = (R)-isodihydrodehydrodiconiferyl alcohol + NADP(+). The enzyme catalyses (2R,3S)-dihydrodehydrodiconiferyl alcohol + NADPH + H(+) = (S)-tetrahydrodehydrodiconiferyl alcohol + NADP(+). It carries out the reaction (2S,3R)-dihydrodehydrodiconiferyl alcohol + NADPH + H(+) = (R)-tetrahydrodehydrodiconiferyl alcohol + NADP(+). Its function is as follows. Oxidoreductase involved in lignan biosynthesis. Catalyzes the NADPH-dependent reduction of phenylcoumaran benzylic ethers. Converts dehydrodiconiferyl alcohol (DDC) to isodihydrodehydrodiconiferyl alcohol (IDDDC), and dihydrodehydrodiconiferyl alcohol (DDDC) to tetrahydrodehydrodiconiferyl alcohol (TDDC). In Pinus taeda (Loblolly pine), this protein is Phenylcoumaran benzylic ether reductase PT1.